Consider the following 72-residue polypeptide: Seed trypsin/chymotrypsin inhibitor IVB (72 aa).

7 disulfides stabilise this stretch: cysteine 8-cysteine 61, cysteine 9-cysteine 24, cysteine 12-cysteine 57, cysteine 14-cysteine 22, cysteine 31-cysteine 38, cysteine 35-cysteine 50, and cysteine 40-cysteine 48.

The protein belongs to the Bowman-Birk serine protease inhibitor family. As to expression, seed.

Functionally, inhibitor of trypsin and of chymotrypsin. May function as a natural phytochemical defense against predators. This chain is Seed trypsin/chymotrypsin inhibitor IVB, found in Pisum sativum (Garden pea).